The following is a 316-amino-acid chain: Porphobilinogen deaminase (316 aa).

Residue C245 is modified to S-(dipyrrolylmethanemethyl)cysteine.

The protein belongs to the HMBS family. Monomer. Requires dipyrromethane as cofactor.

The catalysed reaction is 4 porphobilinogen + H2O = hydroxymethylbilane + 4 NH4(+). Its pathway is porphyrin-containing compound metabolism; protoporphyrin-IX biosynthesis; coproporphyrinogen-III from 5-aminolevulinate: step 2/4. The protein operates within porphyrin-containing compound metabolism; chlorophyll biosynthesis. Its function is as follows. Tetrapolymerization of the monopyrrole PBG into the hydroxymethylbilane pre-uroporphyrinogen in several discrete steps. The polypeptide is Porphobilinogen deaminase (Prochlorococcus marinus (strain MIT 9312)).